A 451-amino-acid polypeptide reads, in one-letter code: Plasmepsin III (451 aa).

Over 1-37 (MNLTIKEEDFTNTFMKNEESFNTFRVTKVKRWNAKRL) the chain is Cytoplasmic. A propeptide spanning residues 1-123 (MNLTIKEEDF…KGLTKKSYLG (123 aa)) is cleaved from the precursor. The chain crosses the membrane as a helical; Signal-anchor for type II membrane protein span at residues 38 to 58 (FKILFVTVFIVLAGGFSYYIF). Topologically, residues 59 to 451 (ENFVFQKNRK…TVGFALAKNL (393 aa)) are lumenal. The Peptidase A1 domain occupies 139–446 (SFGEAKLGDN…DYDNHTVGFA (308 aa)). Intrachain disulfides connect C170-C175 and C372-C408.

It belongs to the peptidase A1 family. As to quaternary structure, probable homodimer; in the zymogen form. Monomer; in the active form. Acidification disrupts homodimerization. Component of the hemozoin formation complex (HFC) composed of falcipains FP2A and/or FP2B, plasmepsins PMII, PMIII/HAP and PMIV, heme detoxifying protein HDP and falcilysin FLN. The HFC complex is involved in hemoglobin degradation and detoxification of heme in the food vacuole during the asexual blood stage. In terms of processing, proteolytically cleaved into the soluble active mature form by cysteine proteases in the digestive vacuole of trophozoites. Proteolysis requires an acidic environment. Transprocessing may serve as an alternate activation system.

It localises to the membrane. The protein localises to the vacuole lumen. It carries out the reaction Hydrolysis of the bonds linking certain hydrophobic residues in hemoglobin or globin. Also cleaves small molecules substrates such as Ala-Leu-Glu-Arg-Thr-Phe-|-Phe(NO2)-Ser-Phe-Pro-Thr.. With respect to regulation, dimerization causes loss of catalytic activity. Inhibited by pepstatin A. Inhibited by Zn(2+). In terms of biological role, during the asexual blood stage, catalyzes the cleavage of denatured host hemoglobin (Hb) or globins. Digestion of host Hb is an essential step which provides the parasite with amino acids for protein synthesis, and regulates osmolarity. The sequence is that of Plasmepsin III from Plasmodium falciparum (isolate 3D7).